A 310-amino-acid polypeptide reads, in one-letter code: N-acetyl-gamma-glutamyl-phosphate reductase (310 aa).

Residue Cys-117 is part of the active site.

Belongs to the NAGSA dehydrogenase family. Type 2 subfamily.

Its subcellular location is the cytoplasm. The enzyme catalyses N-acetyl-L-glutamate 5-semialdehyde + phosphate + NADP(+) = N-acetyl-L-glutamyl 5-phosphate + NADPH + H(+). It functions in the pathway amino-acid biosynthesis; L-arginine biosynthesis; N(2)-acetyl-L-ornithine from L-glutamate: step 3/4. In terms of biological role, catalyzes the NADPH-dependent reduction of N-acetyl-5-glutamyl phosphate to yield N-acetyl-L-glutamate 5-semialdehyde. This is N-acetyl-gamma-glutamyl-phosphate reductase from Rhizobium etli (strain CIAT 652).